The primary structure comprises 627 residues: (+)-sabinene synthase, chloroplastic (627 aa).

The N-terminal 46 residues, 1–46 (MSVISIVPLASNSCLYKSLMSSTHELKALCRPIATLGMCRRGKSVM), are a transit peptide targeting the chloroplast. The Mg(2+) site is built by Asp-378, Asp-382, and Asp-530. The short motif at 378-382 (DDIYD) is the DDXXD motif element.

The protein belongs to the terpene synthase family. Tpsd subfamily. Monomer. Mg(2+) is required as a cofactor.

The protein resides in the plastid. Its subcellular location is the chloroplast. It catalyses the reaction (2E)-geranyl diphosphate = (1R,5R)-sabinene + diphosphate. It functions in the pathway terpene metabolism; oleoresin biosynthesis. Its function is as follows. Terpene synthase (TPS) involved in defensive oleoresin formation in conifers in response to insect attack (e.g. white pine weevil P.strobi) or other injury. Produces (+)-sabinene from geranyl diphosphate, but has no activity with geranylgeranyl diphosphate or farnesyl diphosphate. In Picea sitchensis (Sitka spruce), this protein is (+)-sabinene synthase, chloroplastic (TPS-sab).